Consider the following 209-residue polypeptide: Uracil phosphoribosyltransferase (209 aa).

Residues R79, R104, and 131-139 contribute to the 5-phospho-alpha-D-ribose 1-diphosphate site; that span reads DPMLATGNS. Uracil contacts are provided by residues I194 and 199–201; that span reads GDA. D200 is a binding site for 5-phospho-alpha-D-ribose 1-diphosphate.

It belongs to the UPRTase family. The cofactor is Mg(2+).

It catalyses the reaction UMP + diphosphate = 5-phospho-alpha-D-ribose 1-diphosphate + uracil. The protein operates within pyrimidine metabolism; UMP biosynthesis via salvage pathway; UMP from uracil: step 1/1. Allosterically activated by GTP. Catalyzes the conversion of uracil and 5-phospho-alpha-D-ribose 1-diphosphate (PRPP) to UMP and diphosphate. This chain is Uracil phosphoribosyltransferase, found in Sinorhizobium medicae (strain WSM419) (Ensifer medicae).